A 438-amino-acid polypeptide reads, in one-letter code: sn-glycerol-3-phosphate-binding periplasmic protein UgpB (438 aa).

Residues 1-23 (MKPLHYTASALALGLALMGNAQA) form the signal peptide. Positions 65, 89, 144, 270, 307, 346, and 397 each coordinate sn-glycerol 3-phosphate.

The protein belongs to the bacterial solute-binding protein 1 family. As to quaternary structure, the complex is composed of two ATP-binding proteins (UgpC), two transmembrane proteins (UgpA and UgpE) and a solute-binding protein (UgpB).

The protein resides in the periplasm. Its function is as follows. Part of the ABC transporter complex UgpBAEC involved in sn-glycerol-3-phosphate (G3P) import. Binds G3P. This chain is sn-glycerol-3-phosphate-binding periplasmic protein UgpB (ugpB), found in Escherichia coli O157:H7.